The primary structure comprises 497 residues: Acetyltransferase FGR3 (497 aa).

Positions 221 and 224 each coordinate Ca(2+). Positions 255 and 303 each coordinate CoA. A Ca(2+)-binding site is contributed by Asp386. Residue Thr396 participates in CoA binding. Position 462 (Asp462) interacts with Ca(2+). The interval 477–497 is disordered; that stretch reads DASEAKKANGTNGTNGVNGSS. A compositionally biased stretch (low complexity) spans 485–497; it reads NGTNGTNGVNGSS.

It belongs to the trichothecene 3-O-acetyltransferase family.

It participates in secondary metabolite biosynthesis. Its function is as follows. Acetyltransferase; part of the gene cluster that mediates the biosynthesis of the tetraketides fugralins such as linear fugralin A and cyclic fugralin B, volatile compounds that play a role in the asexual reproductive cycle but are not involved in pathogenicity. One of the key features of fugralins is the presence of a double methyl group, which is only rarely encountered in fungal secondary metabolites. As the fugralins cluster does not contain an independent methyltransferase, the PKS FGR1 is probably responsible for adding two methyl groups to the same carbon atom. Fugralin B is similar to fugralin A except for a cyclization between the carboxylic acid C-8 and the alcohol on C-4 resulting in a six membered lactone ring, probably catalyzed by the cyclase FGR4. The exact role of the individual cluster genes remains unknown and further work is needed to unravel the biosynthetic pathway. The sequence is that of Acetyltransferase FGR3 from Gibberella zeae (strain ATCC MYA-4620 / CBS 123657 / FGSC 9075 / NRRL 31084 / PH-1) (Wheat head blight fungus).